The following is a 281-amino-acid chain: Fibrinogen-like protein 1-like protein (281 aa).

Residues 1-33 (MGLQAGTRQLHGNLILLPVAVVMLLLCTSPVCA) form the signal peptide. Positions 34–246 (TASVGLPADC…RPSSWSNPPM (213 aa)) constitute a Fibrinogen C-terminal domain. 2 disulfide bridges follow: Cys-43-Cys-69 and Cys-201-Cys-213. Low complexity predominate over residues 260–269 (PSRSPSLPSP). Positions 260–281 (PSRSPSLPSPITATHTVRNQLQ) are disordered. Positions 270-281 (ITATHTVRNQLQ) are enriched in polar residues.

As to expression, expressed in smal intestine, colon and lung.

Shows a cytidine deaminase activity on 2'-deoxycytidine (in vitro), however shows no RNA editing activity (in vitro). This Gallus gallus (Chicken) protein is Fibrinogen-like protein 1-like protein.